The chain runs to 316 residues: Transaldolase (316 aa).

K127 serves as the catalytic Schiff-base intermediate with substrate.

This sequence belongs to the transaldolase family. Type 2 subfamily.

Its subcellular location is the cytoplasm. The enzyme catalyses D-sedoheptulose 7-phosphate + D-glyceraldehyde 3-phosphate = D-erythrose 4-phosphate + beta-D-fructose 6-phosphate. It functions in the pathway carbohydrate degradation; pentose phosphate pathway; D-glyceraldehyde 3-phosphate and beta-D-fructose 6-phosphate from D-ribose 5-phosphate and D-xylulose 5-phosphate (non-oxidative stage): step 2/3. Transaldolase is important for the balance of metabolites in the pentose-phosphate pathway. In Helicobacter pylori (strain HPAG1), this protein is Transaldolase.